Consider the following 356-residue polypeptide: MAAMASTAFAPSVSSTTNKLFDSSFHGAPMSPSLLRLQPIKSSRPNNLSISASASPPYDLNTFKFDPIKESIVSREMTRRYMTDMITYADTDVVVVGAGSAGLSCAYELSKNPNIQIAIIEQSVSPGGGAWLGGQLFSAMVVRKPAHIFLDELGIDYDEQDNYVVIKHAALFTSTIMSKLLARPNVKLFNAVAAEDLIVKGGRVGGVVTNWALVSMNHDTQSCMDPNVMEAKVVVSSCGHDGPFGATGVKRLKSIGMIEEVPGMKALDMNSAEDAIVRLTREVVPGMIVTGMEVAEIDGAPRMGPTFGAMMISGQKAAHLALKSLGQPNALDGTYVGGVHPELILAAADSAETADA.

A chloroplast-targeting transit peptide spans Met1–Ser51. Substrate contacts are provided by residues Ala101, Glu121–Gln122, Gly129, and Ala194. Residue Cys223 is modified to 2,3-didehydroalanine (Cys). Substrate contacts are provided by residues Asp225, His240, Met292, and Arg302–Gly304.

It belongs to the THI4 family. As to quaternary structure, homooctamer. The cofactor is Fe cation. Post-translationally, during the catalytic reaction, a sulfide is transferred from Cys-223 to a reaction intermediate, generating a dehydroalanine residue.

It is found in the plastid. Its subcellular location is the chloroplast. It carries out the reaction [ADP-thiazole synthase]-L-cysteine + glycine + NAD(+) = [ADP-thiazole synthase]-dehydroalanine + ADP-5-ethyl-4-methylthiazole-2-carboxylate + nicotinamide + 3 H2O + 2 H(+). In terms of biological role, involved in biosynthesis of the thiamine precursor thiazole. Catalyzes the conversion of NAD and glycine to adenosine diphosphate 5-(2-hydroxyethyl)-4-methylthiazole-2-carboxylic acid (ADT), an adenylated thiazole intermediate. The reaction includes an iron-dependent sulfide transfer from a conserved cysteine residue of the protein to a thiazole intermediate. The enzyme can only undergo a single turnover, which suggests it is a suicide enzyme. May have additional roles in adaptation to various stress conditions and in DNA damage tolerance. This Citrus sinensis (Sweet orange) protein is Thiamine thiazole synthase, chloroplastic.